Here is a 313-residue protein sequence, read N- to C-terminus: Ribosomal RNA small subunit methyltransferase H (313 aa).

Residues 34–36 (GGH), D55, F82, D103, and Q110 contribute to the S-adenosyl-L-methionine site.

It belongs to the methyltransferase superfamily. RsmH family.

The protein localises to the cytoplasm. The catalysed reaction is cytidine(1402) in 16S rRNA + S-adenosyl-L-methionine = N(4)-methylcytidine(1402) in 16S rRNA + S-adenosyl-L-homocysteine + H(+). In terms of biological role, specifically methylates the N4 position of cytidine in position 1402 (C1402) of 16S rRNA. The sequence is that of Ribosomal RNA small subunit methyltransferase H from Pelobacter propionicus (strain DSM 2379 / NBRC 103807 / OttBd1).